The following is a 377-amino-acid chain: Ribosomal RNA large subunit methyltransferase G (377 aa).

This sequence belongs to the methyltransferase superfamily. RlmG family.

Its subcellular location is the cytoplasm. It catalyses the reaction guanosine(1835) in 23S rRNA + S-adenosyl-L-methionine = N(2)-methylguanosine(1835) in 23S rRNA + S-adenosyl-L-homocysteine + H(+). Specifically methylates the guanine in position 1835 (m2G1835) of 23S rRNA. The chain is Ribosomal RNA large subunit methyltransferase G from Streptomyces coelicolor (strain ATCC BAA-471 / A3(2) / M145).